Here is a 328-residue protein sequence, read N- to C-terminus: Eukaryotic translation initiation factor 3 subunit I (328 aa).

5 WD repeats span residues 8–49 (GHER…GTYR), 50–89 (GHNGAVWCCDVSRDSSRLITGSADQTAKLWDVKSGKELFT), 146–185 (DGKKRINRAVWGPLNQTIVSGGEDKVIRIWDAETGKLLKQ), 191–230 (GHKKDITSLCKAADDSHFLTGSLDKTAKLWDMRTLTLLKT), and 288–327 (GHFGPINALAFNPDGKSFSSGGEDGYVRLHHFDSDYFNIK).

This sequence belongs to the eIF-3 subunit I family. In terms of assembly, component of the eukaryotic translation initiation factor 3 (eIF-3) complex.

It localises to the cytoplasm. In terms of biological role, component of the eukaryotic translation initiation factor 3 (eIF-3) complex, which is involved in protein synthesis of a specialized repertoire of mRNAs and, together with other initiation factors, stimulates binding of mRNA and methionyl-tRNAi to the 40S ribosome. The eIF-3 complex specifically targets and initiates translation of a subset of mRNAs involved in cell proliferation. In Arabidopsis thaliana (Mouse-ear cress), this protein is Eukaryotic translation initiation factor 3 subunit I (TIF3I1).